A 358-amino-acid polypeptide reads, in one-letter code: Heme A synthase (358 aa).

8 helical membrane-spanning segments follow: residues 22–42 (IQVW…VGGA), 107–127 (ILGR…WATK), 139–159 (IVPI…ASGI), 173–193 (AFHL…SRGF), 208–228 (FAGW…LVAG), 269–289 (FIHR…AFYV), 302–322 (AFFI…TLLR), and 324–344 (VPIG…CFSV). Histidine 271 is a binding site for heme. Heme is bound at residue histidine 332.

This sequence belongs to the COX15/CtaA family. Type 2 subfamily. As to quaternary structure, interacts with CtaB. The cofactor is heme b.

The protein resides in the cell membrane. It catalyses the reaction Fe(II)-heme o + 2 A + H2O = Fe(II)-heme a + 2 AH2. It functions in the pathway porphyrin-containing compound metabolism; heme A biosynthesis; heme A from heme O: step 1/1. In terms of biological role, catalyzes the conversion of heme O to heme A by two successive hydroxylations of the methyl group at C8. The first hydroxylation forms heme I, the second hydroxylation results in an unstable dihydroxymethyl group, which spontaneously dehydrates, resulting in the formyl group of heme A. In Bartonella quintana (strain Toulouse) (Rochalimaea quintana), this protein is Heme A synthase.